A 284-amino-acid polypeptide reads, in one-letter code: NAD kinase (284 aa).

Residue aspartate 60 is the Proton acceptor of the active site. NAD(+)-binding positions include aspartate 60 to glycine 61, asparagine 134 to glutamate 135, arginine 145, lysine 162, aspartate 164, threonine 175 to serine 180, and glutamine 234.

The protein belongs to the NAD kinase family. It depends on a divalent metal cation as a cofactor.

Its subcellular location is the cytoplasm. It carries out the reaction NAD(+) + ATP = ADP + NADP(+) + H(+). Its function is as follows. Involved in the regulation of the intracellular balance of NAD and NADP, and is a key enzyme in the biosynthesis of NADP. Catalyzes specifically the phosphorylation on 2'-hydroxyl of the adenosine moiety of NAD to yield NADP. This is NAD kinase from Clostridium botulinum (strain Eklund 17B / Type B).